We begin with the raw amino-acid sequence, 344 residues long: NADH-quinone oxidoreductase subunit H 2 (344 aa).

8 consecutive transmembrane segments (helical) span residues 13 to 33 (LPIL…VAWL), 82 to 102 (ILFL…WAVI), 116 to 136 (ALLY…LAGW), 161 to 181 (MGFA…GEIV), 188 to 208 (FWHW…ISGV), 240 to 260 (LFFL…ALMF), 280 to 300 (VPGI…YLWF), and 319 to 339 (VFIP…VAQL).

The protein belongs to the complex I subunit 1 family. As to quaternary structure, NDH-1 is composed of 14 different subunits. Subunits NuoA, H, J, K, L, M, N constitute the membrane sector of the complex.

The protein localises to the cell inner membrane. It carries out the reaction a quinone + NADH + 5 H(+)(in) = a quinol + NAD(+) + 4 H(+)(out). NDH-1 shuttles electrons from NADH, via FMN and iron-sulfur (Fe-S) centers, to quinones in the respiratory chain. The immediate electron acceptor for the enzyme in this species is believed to be ubiquinone. Couples the redox reaction to proton translocation (for every two electrons transferred, four hydrogen ions are translocated across the cytoplasmic membrane), and thus conserves the redox energy in a proton gradient. This subunit may bind ubiquinone. This chain is NADH-quinone oxidoreductase subunit H 2, found in Nitrosococcus oceani (strain ATCC 19707 / BCRC 17464 / JCM 30415 / NCIMB 11848 / C-107).